Here is a 185-residue protein sequence, read N- to C-terminus: Ribosome-recycling factor (185 aa).

The protein belongs to the RRF family.

The protein resides in the cytoplasm. In terms of biological role, responsible for the release of ribosomes from messenger RNA at the termination of protein biosynthesis. May increase the efficiency of translation by recycling ribosomes from one round of translation to another. The chain is Ribosome-recycling factor from Campylobacter jejuni subsp. doylei (strain ATCC BAA-1458 / RM4099 / 269.97).